Here is a 195-residue protein sequence, read N- to C-terminus: Imidazoleglycerol-phosphate dehydratase (195 aa).

Belongs to the imidazoleglycerol-phosphate dehydratase family.

The protein resides in the cytoplasm. It catalyses the reaction D-erythro-1-(imidazol-4-yl)glycerol 3-phosphate = 3-(imidazol-4-yl)-2-oxopropyl phosphate + H2O. It participates in amino-acid biosynthesis; L-histidine biosynthesis; L-histidine from 5-phospho-alpha-D-ribose 1-diphosphate: step 6/9. In Beijerinckia indica subsp. indica (strain ATCC 9039 / DSM 1715 / NCIMB 8712), this protein is Imidazoleglycerol-phosphate dehydratase.